The sequence spans 145 residues: Large ribosomal subunit protein uL15 (145 aa).

Residues 1-58 (MKLHELSPSEGSRKKRKRVGRGPGSGMGGTSTRGNKGHNQRSGGGTRPGFEGGQMPLH) form a disordered region. Gly residues-rich tracts occupy residues 21-31 (RGPGSGMGGTS) and 42-52 (SGGGTRPGFEG).

This sequence belongs to the universal ribosomal protein uL15 family. In terms of assembly, part of the 50S ribosomal subunit.

In terms of biological role, binds to the 23S rRNA. The polypeptide is Large ribosomal subunit protein uL15 (Desulforapulum autotrophicum (strain ATCC 43914 / DSM 3382 / VKM B-1955 / HRM2) (Desulfobacterium autotrophicum)).